The primary structure comprises 257 residues: Phosphate import ATP-binding protein PstB (257 aa).

In terms of domain architecture, ABC transporter spans 4–252 (LKLNDVNIYY…PDNKETEDYI (249 aa)). Residue 36–43 (GPSGCGKS) coordinates ATP.

The protein belongs to the ABC transporter superfamily. Phosphate importer (TC 3.A.1.7) family. As to quaternary structure, the complex is composed of two ATP-binding proteins (PstB), two transmembrane proteins (PstC and PstA) and a solute-binding protein (PstS).

Its subcellular location is the cell membrane. The catalysed reaction is phosphate(out) + ATP + H2O = ADP + 2 phosphate(in) + H(+). In terms of biological role, part of the ABC transporter complex PstSACB involved in phosphate import. Responsible for energy coupling to the transport system. The polypeptide is Phosphate import ATP-binding protein PstB (Corynebacterium efficiens (strain DSM 44549 / YS-314 / AJ 12310 / JCM 11189 / NBRC 100395)).